Reading from the N-terminus, the 441-residue chain is ATP-dependent protease ATPase subunit HslU (441 aa).

ATP is bound by residues isoleucine 18, 60 to 65, aspartate 254, glutamate 319, and arginine 391; that span reads GVGKTE.

The protein belongs to the ClpX chaperone family. HslU subfamily. A double ring-shaped homohexamer of HslV is capped on each side by a ring-shaped HslU homohexamer. The assembly of the HslU/HslV complex is dependent on binding of ATP.

The protein localises to the cytoplasm. ATPase subunit of a proteasome-like degradation complex; this subunit has chaperone activity. The binding of ATP and its subsequent hydrolysis by HslU are essential for unfolding of protein substrates subsequently hydrolyzed by HslV. HslU recognizes the N-terminal part of its protein substrates and unfolds these before they are guided to HslV for hydrolysis. This is ATP-dependent protease ATPase subunit HslU from Shewanella frigidimarina (strain NCIMB 400).